The primary structure comprises 41 residues: Large ribosomal subunit protein bL36 (41 aa).

Belongs to the bacterial ribosomal protein bL36 family.

This Mesorhizobium japonicum (strain LMG 29417 / CECT 9101 / MAFF 303099) (Mesorhizobium loti (strain MAFF 303099)) protein is Large ribosomal subunit protein bL36.